The sequence spans 291 residues: Bifunctional protein FolD (291 aa).

Residues 167-169, S192, and I233 contribute to the NADP(+) site; that span reads GRS.

The protein belongs to the tetrahydrofolate dehydrogenase/cyclohydrolase family. Homodimer.

It catalyses the reaction (6R)-5,10-methylene-5,6,7,8-tetrahydrofolate + NADP(+) = (6R)-5,10-methenyltetrahydrofolate + NADPH. The catalysed reaction is (6R)-5,10-methenyltetrahydrofolate + H2O = (6R)-10-formyltetrahydrofolate + H(+). It functions in the pathway one-carbon metabolism; tetrahydrofolate interconversion. Catalyzes the oxidation of 5,10-methylenetetrahydrofolate to 5,10-methenyltetrahydrofolate and then the hydrolysis of 5,10-methenyltetrahydrofolate to 10-formyltetrahydrofolate. The chain is Bifunctional protein FolD from Dichelobacter nodosus (strain VCS1703A).